The chain runs to 381 residues: Peptidoglycan glycosyltransferase MrdB (381 aa).

A run of 10 helical transmembrane segments spans residues 11–31 (FDLL…LLIF), 40–60 (KQGV…FIPF), 66–86 (WLFA…FMGS), 102–122 (ITLQ…AHLI), 132–152 (YDWG…ALIL), 156–176 (DLGT…IVGL), 180–200 (VWLP…HFLH), 263–283 (FGFL…LHLF), 297–317 (IVAL…IAMT), and 328–348 (LPLF…FAIL).

This sequence belongs to the SEDS family. MrdB/RodA subfamily.

It is found in the cell inner membrane. It catalyses the reaction [GlcNAc-(1-&gt;4)-Mur2Ac(oyl-L-Ala-gamma-D-Glu-L-Lys-D-Ala-D-Ala)](n)-di-trans,octa-cis-undecaprenyl diphosphate + beta-D-GlcNAc-(1-&gt;4)-Mur2Ac(oyl-L-Ala-gamma-D-Glu-L-Lys-D-Ala-D-Ala)-di-trans,octa-cis-undecaprenyl diphosphate = [GlcNAc-(1-&gt;4)-Mur2Ac(oyl-L-Ala-gamma-D-Glu-L-Lys-D-Ala-D-Ala)](n+1)-di-trans,octa-cis-undecaprenyl diphosphate + di-trans,octa-cis-undecaprenyl diphosphate + H(+). It participates in cell wall biogenesis; peptidoglycan biosynthesis. In terms of biological role, peptidoglycan polymerase that is essential for cell wall elongation. In Helicobacter pylori (strain J99 / ATCC 700824) (Campylobacter pylori J99), this protein is Peptidoglycan glycosyltransferase MrdB.